A 141-amino-acid polypeptide reads, in one-letter code: Hemoglobin subunit alpha (141 aa).

Residues 1–141 form the Globin domain; it reads VLSSTDKSNV…VSTVLTSKYR (141 aa). Serine 3 carries the post-translational modification Phosphoserine. Residues lysine 7 and lysine 11 each carry the N6-succinyllysine modification. The residue at position 16 (lysine 16) is an N6-acetyllysine; alternate. At lysine 16 the chain carries N6-succinyllysine; alternate. Phosphotyrosine is present on tyrosine 24. Serine 35 is modified (phosphoserine). Lysine 40 bears the N6-succinyllysine mark. Histidine 58 contributes to the O2 binding site. Histidine 87 contributes to the heme b binding site. Serine 102 is subject to Phosphoserine. Threonine 108 carries the post-translational modification Phosphothreonine. A phosphoserine mark is found at serine 124 and serine 131. Phosphothreonine is present on residues threonine 134 and threonine 137. A Phosphoserine modification is found at serine 138.

Belongs to the globin family. Heterotetramer of two alpha chains and two beta chains. In terms of tissue distribution, red blood cells.

Functionally, involved in oxygen transport from the lung to the various peripheral tissues. In terms of biological role, hemopressin acts as an antagonist peptide of the cannabinoid receptor CNR1. Hemopressin-binding efficiently blocks cannabinoid receptor CNR1 and subsequent signaling. This Pteropus poliocephalus (Grey-headed flying fox) protein is Hemoglobin subunit alpha (HBA).